Here is a 250-residue protein sequence, read N- to C-terminus: 5-oxoprolinase subunit A (250 aa).

This sequence belongs to the LamB/PxpA family. As to quaternary structure, forms a complex composed of PxpA, PxpB and PxpC.

The catalysed reaction is 5-oxo-L-proline + ATP + 2 H2O = L-glutamate + ADP + phosphate + H(+). Catalyzes the cleavage of 5-oxoproline to form L-glutamate coupled to the hydrolysis of ATP to ADP and inorganic phosphate. The sequence is that of 5-oxoprolinase subunit A from Streptomyces avermitilis (strain ATCC 31267 / DSM 46492 / JCM 5070 / NBRC 14893 / NCIMB 12804 / NRRL 8165 / MA-4680).